Here is a 36-residue protein sequence, read N- to C-terminus: Protein YnfP (36 aa).

The sequence is that of Protein YnfP from Escherichia coli (strain K12).